The primary structure comprises 357 residues: Isopenicillin-N N-acyltransferase (357 aa).

Aspartate 121 and arginine 310 together coordinate 6-aminopenicillanate.

Belongs to the peptidase C45 family. In terms of assembly, the active form of the enzyme results from processing of the 40-kDa monomeric precursor to a heterodimer containing subunits of 11 and 29 kDa. Post-translationally, the pre-AAT protein is synthesized as 40 kDa precursor which is then self-processed into an 11 kDa (protein A) and a 29 kDa (protein B). The B protein carries AAT activity.

The protein resides in the peroxisome matrix. It catalyses the reaction isopenicillin N + phenylacetyl-CoA + H2O = penicillin G + L-2-aminoadipate + CoA + H(+). It functions in the pathway antibiotic biosynthesis; penicillin G biosynthesis; penicillin G from L-alpha-aminoadipate and L-cysteine and L-valine: step 3/3. Its function is as follows. Isopenicillin-N N-acyltransferase; part of the gene cluster that mediates the biosynthesis of penicillin, the world's most important antibiotic. AatA catalyzes the exchange of the alpha-aminoadipyl side chain of isopenicillin N for phenylacetic acid to yield penicillin. This step occurs in the peroxisomal matrix and the penM and paaT transporters are involved in the isopenicillin N and phenylacetic acid import into the peroxisome, respectively. The penicillin biosynthesis occurs via 3 enzymatic steps, the first corresponding to the production of the tripeptide N-[(5S)-5-amino-5-carboxypentanoyl]-L-cysteinyl-D-valine (LLD-ACV or ACV) by the NRPS acvA. The tripeptide ACV is then cyclized to isopenicillin N (IPN) by the isopenicillin N synthase ipnA that forms the beta-lactam nucleus. Finally, the alpha-aminoadipyl side chain is exchanged for phenylacetic acid by the isopenicillin N acyltransferase aatA to yield penicillin in the peroxisomal matrix. This Penicillium chrysogenum (Penicillium notatum) protein is Isopenicillin-N N-acyltransferase.